We begin with the raw amino-acid sequence, 431 residues long: Aspartate--tRNA(Asp/Asn) ligase (431 aa).

Residue glutamate 170 participates in L-aspartate binding. Residues 192 to 195 (QLYK) form an aspartate region. Arginine 214 is an L-aspartate binding site. ATP is bound by residues 214 to 216 (RAE), 222 to 224 (RHL), and glutamate 354. Mg(2+)-binding residues include glutamate 354 and serine 357. Residues serine 357 and arginine 361 each contribute to the L-aspartate site. Position 402–405 (402–405 (GLER)) interacts with ATP.

This sequence belongs to the class-II aminoacyl-tRNA synthetase family. Type 2 subfamily. As to quaternary structure, homodimer. Mg(2+) is required as a cofactor.

Its subcellular location is the cytoplasm. The enzyme catalyses tRNA(Asx) + L-aspartate + ATP = L-aspartyl-tRNA(Asx) + AMP + diphosphate. In terms of biological role, aspartyl-tRNA synthetase with relaxed tRNA specificity since it is able to aspartylate not only its cognate tRNA(Asp) but also tRNA(Asn). Reaction proceeds in two steps: L-aspartate is first activated by ATP to form Asp-AMP and then transferred to the acceptor end of tRNA(Asp/Asn). This is Aspartate--tRNA(Asp/Asn) ligase from Methanopyrus kandleri (strain AV19 / DSM 6324 / JCM 9639 / NBRC 100938).